The following is a 341-amino-acid chain: Phosphoribosylformylglycinamidine cyclo-ligase (341 aa).

Belongs to the AIR synthase family.

The protein resides in the cytoplasm. It catalyses the reaction 2-formamido-N(1)-(5-O-phospho-beta-D-ribosyl)acetamidine + ATP = 5-amino-1-(5-phospho-beta-D-ribosyl)imidazole + ADP + phosphate + H(+). It participates in purine metabolism; IMP biosynthesis via de novo pathway; 5-amino-1-(5-phospho-D-ribosyl)imidazole from N(2)-formyl-N(1)-(5-phospho-D-ribosyl)glycinamide: step 2/2. In Lachnoclostridium phytofermentans (strain ATCC 700394 / DSM 18823 / ISDg) (Clostridium phytofermentans), this protein is Phosphoribosylformylglycinamidine cyclo-ligase.